We begin with the raw amino-acid sequence, 918 residues long: Probable UDP-N-acetylglucosamine--peptide N-acetylglucosaminyltransferase SPINDLY (918 aa).

TPR repeat units follow at residues 34–66 (GKEA…SKNV), 67–99 (EAHI…DPHN), 101–132 (CALT…DPSY), 140–171 (ATVL…DPHY), 172–205 (APAC…SPTY), 207–238 (DAYC…NNMG), 239–271 (IALT…NWHY), 273–305 (DAMY…NPHC), 306–339 (AEAC…KPNF), 341–373 (QSLN…NPTY), and 374–407 (AEAY…DPDS). A catalytic region region spans residues 408–918 (RNAGQNRLLA…LNCGDQCFRV (511 aa)). Residues 843–853 (QLHQQPNTSPQ) show a composition bias toward polar residues. The disordered stretch occupies residues 843–877 (QLHQQPNTSPQKLVKDEPADDASGPEHGPASKDNP).

The protein belongs to the glycosyltransferase 41 family. O-GlcNAc transferase subfamily.

Its subcellular location is the nucleus. It catalyses the reaction L-seryl-[protein] + UDP-N-acetyl-alpha-D-glucosamine = 3-O-(N-acetyl-beta-D-glucosaminyl)-L-seryl-[protein] + UDP + H(+). The catalysed reaction is L-threonyl-[protein] + UDP-N-acetyl-alpha-D-glucosamine = 3-O-(N-acetyl-beta-D-glucosaminyl)-L-threonyl-[protein] + UDP + H(+). Its pathway is protein modification; protein glycosylation. Probable O-linked N-acetylglucosamine transferase (OGT) involved in various processes such as gibberellin (GA) signaling pathway. OGTs catalyze the addition of nucleotide-activated sugars directly onto the polypeptide through O-glycosidic linkage with the hydroxyl of serine or threonine. Probably acts by adding O-linked sugars to yet unknown proteins. May function as a negative regulator of GA signal transduction during vernalization, inhibiting adventitious shoot elongation during vernalization. The chain is Probable UDP-N-acetylglucosamine--peptide N-acetylglucosaminyltransferase SPINDLY (SPY) from Eustoma exaltatum subsp. russellianum (Bluebells).